The following is a 452-amino-acid chain: Glutathione gamma-glutamylcysteinyltransferase 2 (452 aa).

One can recognise a Peptidase C83 domain in the interval 1–220 (MSMASLYRRS…GFMLISRPHR (220 aa)). Residues 287 to 315 (EDVNQNLSSEEKSRLKLKQELLKQVQETK) are a coiled coil.

Belongs to the phytochelatin synthase family. As to expression, expressed in shoots, roots, leaves, stems and flowers.

The enzyme catalyses [Glu(-Cys)](n)-Gly + glutathione + H(+) = [Glu(-Cys)](n+1)-Gly + glycine. Requires cadmium for activity. Also activated in heterologous system by AsO(4)(3-) ions, but not by Cu(2+), Zn(2+), Mn(2+) or Ni(2+) ions. Functionally, involved in the synthesis of phytochelatins (PC) and homophytochelatins (hPC), the heavy-metal-binding peptides of plants. The chain is Glutathione gamma-glutamylcysteinyltransferase 2 (PCS2) from Arabidopsis thaliana (Mouse-ear cress).